The sequence spans 1146 residues: Large proline-rich protein BAG6 (1146 aa).

Met1 is modified (N-acetylmethionine). In terms of domain architecture, Ubiquitin-like spans 17 to 92 (LEVLVKTLDS…HLVERAPPQT (76 aa)). Disordered stretches follow at residues 87-128 (RAPP…HDRN), 186-268 (RGGT…HPSP), 381-436 (TMTG…TSHP), 457-525 (QDSG…QGAG), and 555-618 (PGMA…SAAD). Residue Ser96 is modified to Phosphoserine. Over residues 96-108 (SGASSGTGSASAT) the composition is skewed to low complexity. Residues 109-122 (HGGGPLPGTRGPGA) show a composition bias toward gly residues. Phosphothreonine is present on Thr117. Over residues 208–217 (VALNSQTSEP) the composition is skewed to polar residues. 2 repeat units span residues 236–265 (RPPTQTPELPPSGPAPAGPAPAPETNAPNH) and 410–438 (PSSATVDSSTEGAPPPGPAPPPATSHPRV). The tract at residues 236 to 650 (RPPTQTPELP…LASPTITVAV (415 aa)) is 4 X 29 AA approximate repeats. Positions 239–257 (TQTPELPPSGPAPAGPAPA) are enriched in pro residues. Residues 394-413 (GAEAASPGSGQASSLPPSSA) are compositionally biased toward low complexity. Composition is skewed to pro residues over residues 422 to 433 (APPPGPAPPPAT) and 502 to 515 (PTPPQARPSHPGGP). Composition is skewed to low complexity over residues 555-573 (PGMAPASASAPATAQAQAP) and 583-601 (PATASASAGTTNTATTAGP). Repeat copies occupy residues 589–616 (SAGTTNTATTAGPAPGGPAQPPPPQPSA) and 622–650 (SQLLGNLLGPAGPGAGGPSLASPTITVAV). The segment covering 603–614 (PGGPAQPPPPQP) has biased composition (pro residues). Disordered regions lie at residues 666–711 (ASQA…ESLP) and 961–1146 (PQAL…ADDP). Positions 670–694 (APPPPPPPPPPPPAPEQQTTPPPGS) are enriched in pro residues. Over residues 977 to 986 (TSPEPQREDA) the composition is skewed to basic and acidic residues. Residues Ser978 and Ser987 each carry the phosphoserine modification. A compositionally biased stretch (low complexity) spans 1021 to 1034 (AEPWAAAVPPEWVP). The tract at residues 1024 to 1054 (WAAAVPPEWVPIIQQDIQSQRKVKPQPPLSD) is required for interaction with GET4. Residues 1026 to 1068 (AAVPPEWVPIIQQDIQSQRKVKPQPPLSDAYLSGMPAKRRKTM) carry the Nuclear localization site motif. The sufficient for the delivery of client proteins to the endoplasmic reticulum stretch occupies residues 1036-1146 (IQQDIQSQRK…NAHRAFADDP (111 aa)). Thr1067 carries the post-translational modification Phosphothreonine. The segment at 1072–1129 (GPQLLLSEAVSRAAKAAGARPLTSPESLSRDLEAPEVQESYRQQLRSDIQKRLQEDPN) is BAG-similar domain, required and sufficient for interaction with UBL4A. A compositionally biased stretch (low complexity) spans 1080-1090 (AVSRAAKAAGA). 2 positions are modified to phosphoserine: Ser1095 and Ser1131.

As to quaternary structure, component of the BAG6/BAT3 complex, also named BAT3 complex, at least composed of BAG6, UBL4A and GET4/TRC35. Interacts with GET4; the interaction is direct and localizes BAG6 in the cytosol. Interacts with UBL4A; the interaction is direct and required for UBL4A protein stability. Interacts with AIFM1. Interacts with HSPA2. Interacts with CTCFL. Interacts with p300/EP300. Interacts (via ubiquitin-like domain) with RNF126; required for BAG6-dependent ubiquitination of proteins mislocalized to the cytosol. Interacts (via ubiquitin-like domain) with SGTA; SGTA competes with RNF126 by binding the same region of BAG6, thereby promoting deubiquitination of BAG6-target proteins and rescuing them from degradation. Interacts with ricin A chain. Interacts with VCP and AMFR; both form the VCP/p97-AMFR/gp78 complex. Interacts with SYVN1. Interacts with USP13; the interaction is direct and may mediate UBL4A deubiquitination. Interacts with ZFAND2B. Interacts with KPNA2. Interacts with UBQLN4. In terms of processing, ricin can induce a cleavage by the caspase CASP3. The released C-terminal peptide induces apoptosis.

It localises to the cytoplasm. It is found in the cytosol. The protein resides in the nucleus. Its subcellular location is the secreted. The protein localises to the extracellular exosome. In terms of biological role, ATP-independent molecular chaperone preventing the aggregation of misfolded and hydrophobic patches-containing proteins. Functions as part of a cytosolic protein quality control complex, the BAG6/BAT3 complex, which maintains these client proteins in a soluble state and participates in their proper delivery to the endoplasmic reticulum or alternatively can promote their sorting to the proteasome where they undergo degradation. The BAG6/BAT3 complex is involved in the post-translational delivery of tail-anchored/type II transmembrane proteins to the endoplasmic reticulum membrane. Recruited to ribosomes, it interacts with the transmembrane region of newly synthesized tail-anchored proteins and together with SGTA and ASNA1 mediates their delivery to the endoplasmic reticulum. Client proteins that cannot be properly delivered to the endoplasmic reticulum are ubiquitinated by RNF126, an E3 ubiquitin-protein ligase associated with BAG6 and are sorted to the proteasome. SGTA which prevents the recruitment of RNF126 to BAG6 may negatively regulate the ubiquitination and the proteasomal degradation of client proteins. Similarly, the BAG6/BAT3 complex also functions as a sorting platform for proteins of the secretory pathway that are mislocalized to the cytosol either delivering them to the proteasome for degradation or to the endoplasmic reticulum. The BAG6/BAT3 complex also plays a role in the endoplasmic reticulum-associated degradation (ERAD), a quality control mechanism that eliminates unwanted proteins of the endoplasmic reticulum through their retrotranslocation to the cytosol and their targeting to the proteasome. It maintains these retrotranslocated proteins in an unfolded yet soluble state condition in the cytosol to ensure their proper delivery to the proteasome. BAG6 is also required for selective ubiquitin-mediated degradation of defective nascent chain polypeptides by the proteasome. In this context, it may participate in the production of antigenic peptides and play a role in antigen presentation in immune response. BAG6 is also involved in endoplasmic reticulum stress-induced pre-emptive quality control, a mechanism that selectively attenuates the translocation of newly synthesized proteins into the endoplasmic reticulum and reroutes them to the cytosol for proteasomal degradation. BAG6 may ensure the proper degradation of these proteins and thereby protects the endoplasmic reticulum from protein overload upon stress. By inhibiting the polyubiquitination and subsequent proteasomal degradation of HSPA2 it may also play a role in the assembly of the synaptonemal complex during spermatogenesis. Also positively regulates apoptosis by interacting with and stabilizing the proapoptotic factor AIFM1. By controlling the steady-state expression of the IGF1R receptor, indirectly regulates the insulin-like growth factor receptor signaling pathway. Involved in DNA damage-induced apoptosis: following DNA damage, accumulates in the nucleus and forms a complex with p300/EP300, enhancing p300/EP300-mediated p53/TP53 acetylation leading to increase p53/TP53 transcriptional activity. When nuclear, may also act as a component of some chromatin regulator complex that regulates histone 3 'Lys-4' dimethylation (H3K4me2). Functionally, released extracellularly via exosomes, it is a ligand of the natural killer/NK cells receptor NCR3 and stimulates NK cells cytotoxicity. It may thereby trigger NK cells cytotoxicity against neighboring tumor cells and immature myeloid dendritic cells (DC). Its function is as follows. May mediate ricin-induced apoptosis. The protein is Large proline-rich protein BAG6 of Rattus norvegicus (Rat).